The following is a 348-amino-acid chain: Large ribosomal subunit protein uL10 (348 aa).

The tract at residues 291 to 348 is disordered; the sequence is LPEELRGVSAADTGAAEEEESTDEEAADADQADAAEDDDAADDDGDDEDAGDALGSLF. Acidic residues predominate over residues 305 to 341; the sequence is AAEEEESTDEEAADADQADAAEDDDAADDDGDDEDAG.

This sequence belongs to the universal ribosomal protein uL10 family. Part of the 50S ribosomal subunit. Forms part of the ribosomal stalk which helps the ribosome interact with GTP-bound translation factors. Forms a heptameric L10(L12)2(L12)2(L12)2 complex, where L10 forms an elongated spine to which the L12 dimers bind in a sequential fashion.

In terms of biological role, forms part of the ribosomal stalk, playing a central role in the interaction of the ribosome with GTP-bound translation factors. The chain is Large ribosomal subunit protein uL10 from Haloferax volcanii (strain ATCC 29605 / DSM 3757 / JCM 8879 / NBRC 14742 / NCIMB 2012 / VKM B-1768 / DS2) (Halobacterium volcanii).